Reading from the N-terminus, the 348-residue chain is Cyclic AMP-dependent transcription factor ATF-4 (348 aa).

Lys-53 participates in a covalent cross-link: Glycyl lysine isopeptide (Lys-Gly) (interchain with G-Cter in SUMO2). Disordered stretches follow at residues 151 to 174 (QGAPFTFFQPLPPSPGTLSSTPDH) and 187 to 265 (PEGD…GEKM). Residues Ser-211, Ser-215, Ser-220, Ser-227, and Ser-231 each carry the phosphoserine modification. Residues 211 to 220 (SDNDSGICMS) carry the BetaTrCP degron motif motif. Residues 221–241 (PDSSLGSPQDSPSTSRGSPNK) show a composition bias toward polar residues. Pro-232 bears the 4-hydroxyproline mark. Residues Ser-242 and Ser-245 each carry the phosphoserine modification. Residues 242–253 (SLLSPGALSGSS) show a composition bias toward low complexity. Glycyl lysine isopeptide (Lys-Gly) (interchain with G-Cter in SUMO2) cross-links involve residues Lys-256, Lys-264, and Lys-269. Positions 275–338 (LDKKLKKMEQ…QYLKDQIEEV (64 aa)) constitute a bZIP domain. The interval 277–297 (KKLKKMEQNKTAATRYRQKKR) is basic motif. Positions 302–338 (ALTGECKELEKKNEALKEKADSLAKEIQYLKDQIEEV) are interaction with GABBR1. The interval 303–331 (LTGECKELEKKNEALKEKADSLAKEIQYL) is leucine-zipper. Lys-308 carries the N6-acetyllysine modification.

It belongs to the bZIP family. As to quaternary structure, binds DNA as a homodimer and as a heterodimer. Heterodimer; heterodimerizes with CEBPB. Heterodimer; heterodimerizes with DDIT3/CHOP. Interacts with CEP290 (via an N-terminal region). Interacts with NEK6, DAPK2 (isoform 2) and ZIPK/DAPK3. Interacts (via its leucine zipper domain) with GABBR1 and GABBR2 (via their C-termini). Forms a heterodimer with TXLNG in osteoblasts. Interacts (via its DNA binding domain) with FOXO1 (C-terminal half); the interaction occurs in osteoblasts and regulates glucose homeostasis through suppression of beta-cell proliferation and a decrease in insulin production. Interacts with SATB2; the interaction results in enhanced DNA binding and transactivation by these transcription factors. Interacts with ABRAXAS2. Interacts with TRIB3, inhibiting the transactivation activity of ATF4. Interacts with DISC1; which inhibits ATF4 transcription factor activity by disrupting ATF4 dimerization and DNA-binding. Interacts with EP300/p300; EP300/p300 stabilizes ATF4 and increases its transcriptional activity independently of its catalytic activity by preventing its ubiquitination. Ubiquitinated by SCF(BTRC) in response to mTORC1 signal, followed by proteasomal degradation and leading to down-regulate expression of SIRT4. Interaction with EP300/p300 inhibits ubiquitination by SCF(BTRC). Post-translationally, phosphorylation at Ser-242 by RPS6KA3/RSK2 in osteoblasts enhances transactivation activity and promotes osteoblast differentiation. Phosphorylated on the betaTrCP degron motif at Ser-215, followed by phosphorylation at Ser-220, Ser-227, Ser-231 and Ser-245, promoting interaction with BTRC and ubiquitination. Phosphorylation is promoted by mTORC1. Phosphorylation at Ser-211 by CK2 decreases its stability. Phosphorylated by NEK6. In terms of processing, hydroxylated by PHD3, leading to decreased protein stability.

The protein localises to the nucleus. It is found in the nucleus speckle. Its subcellular location is the cytoplasm. The protein resides in the cell membrane. It localises to the cytoskeleton. The protein localises to the microtubule organizing center. It is found in the centrosome. In terms of biological role, transcription factor that binds the cAMP response element (CRE) (consensus: 5'-GTGACGT[AC][AG]-3') and displays two biological functions, as regulator of metabolic and redox processes under normal cellular conditions, and as master transcription factor during integrated stress response (ISR). Binds to asymmetric CRE's as a heterodimer and to palindromic CRE's as a homodimer. Core effector of the ISR, which is required for adaptation to various stress such as endoplasmic reticulum (ER) stress, amino acid starvation, mitochondrial stress or oxidative stress. During ISR, ATF4 translation is induced via an alternative ribosome translation re-initiation mechanism in response to EIF2S1/eIF-2-alpha phosphorylation, and stress-induced ATF4 acts as a master transcription factor of stress-responsive genes in order to promote cell recovery. Promotes the transcription of genes linked to amino acid sufficiency and resistance to oxidative stress to protect cells against metabolic consequences of ER oxidation. Activates the transcription of NLRP1, possibly in concert with other factors in response to ER stress. Activates the transcription of asparagine synthetase (ASNS) in response to amino acid deprivation or ER stress. However, when associated with DDIT3/CHOP, the transcriptional activation of the ASNS gene is inhibited in response to amino acid deprivation. Together with DDIT3/CHOP, mediates programmed cell death by promoting the expression of genes involved in cellular amino acid metabolic processes, mRNA translation and the terminal unfolded protein response (terminal UPR), a cellular response that elicits programmed cell death when ER stress is prolonged and unresolved. Activates the expression of COX7A2L/SCAF1 downstream of the EIF2AK3/PERK-mediated unfolded protein response, thereby promoting formation of respiratory chain supercomplexes and increasing mitochondrial oxidative phosphorylation. Together with DDIT3/CHOP, activates the transcription of the IRS-regulator TRIB3 and promotes ER stress-induced neuronal cell death by regulating the expression of BBC3/PUMA in response to ER stress. May cooperate with the UPR transcriptional regulator QRICH1 to regulate ER protein homeostasis which is critical for cell viability in response to ER stress. In the absence of stress, ATF4 translation is at low levels and it is required for normal metabolic processes such as embryonic lens formation, fetal liver hematopoiesis, bone development and synaptic plasticity. Acts as a regulator of osteoblast differentiation in response to phosphorylation by RPS6KA3/RSK2: phosphorylation in osteoblasts enhances transactivation activity and promotes expression of osteoblast-specific genes and post-transcriptionally regulates the synthesis of Type I collagen, the main constituent of the bone matrix. Cooperates with FOXO1 in osteoblasts to regulate glucose homeostasis through suppression of beta-cell production and decrease in insulin production. Activates transcription of SIRT4. Regulates the circadian expression of the core clock component PER2 and the serotonin transporter SLC6A4. Binds in a circadian time-dependent manner to the cAMP response elements (CRE) in the SLC6A4 and PER2 promoters and periodically activates the transcription of these genes. Mainly acts as a transcriptional activator in cellular stress adaptation, but it can also act as a transcriptional repressor: acts as a regulator of synaptic plasticity by repressing transcription, thereby inhibiting induction and maintenance of long-term memory. Regulates synaptic functions via interaction with DISC1 in neurons, which inhibits ATF4 transcription factor activity by disrupting ATF4 dimerization and DNA-binding. The polypeptide is Cyclic AMP-dependent transcription factor ATF-4 (Bos taurus (Bovine)).